Reading from the N-terminus, the 325-residue chain is Flotillin-like protein FloA (325 aa).

2 helical membrane passes run 4 to 24 (LGIV…FSFI) and 26 to 46 (VGLW…TLVA).

It belongs to the flotillin-like FloA family. As to quaternary structure, homooligomerizes.

It is found in the cell membrane. The protein resides in the membrane raft. Found in functional membrane microdomains (FMM) that may be equivalent to eukaryotic membrane rafts. FMMs are highly dynamic and increase in number as cells age. Flotillins are thought to be important factors in membrane fluidity. The protein is Flotillin-like protein FloA of Thermus thermophilus (strain ATCC BAA-163 / DSM 7039 / HB27).